Here is a 165-residue protein sequence, read N- to C-terminus: Probable calcium-binding protein CML18 (165 aa).

4 EF-hand domains span residues 16-51 (EQLA…LGLK), 52-87 (PSQD…DLVK), 90-125 (YTDD…LGHA), and 126-161 (LTAE…AAFD). The Ca(2+) site is built by D29, N31, D33, S35, E40, D65, N67, N69, E76, D103, D105, N107, Y109, E114, D139, D141, D143, C145, and E150.

Calcium and pH-dependent interaction with NHX1 (increases when pH decreases, better at pH 5.5 than at pH 7.5). Also interacts with the CPB protein At2g18750.

The protein localises to the vacuole. Its function is as follows. Potential calcium sensor that modulates ion selectivity of NHX1. This Arabidopsis thaliana (Mouse-ear cress) protein is Probable calcium-binding protein CML18 (CML18).